A 575-amino-acid polypeptide reads, in one-letter code: Arginine--tRNA ligase (575 aa).

Positions 122–132 (PNVAKEMHVGH) match the 'HIGH' region motif.

Belongs to the class-I aminoacyl-tRNA synthetase family. Monomer.

The protein localises to the cytoplasm. It carries out the reaction tRNA(Arg) + L-arginine + ATP = L-arginyl-tRNA(Arg) + AMP + diphosphate. This Actinobacillus succinogenes (strain ATCC 55618 / DSM 22257 / CCUG 43843 / 130Z) protein is Arginine--tRNA ligase.